The chain runs to 299 residues: S-formylglutathione hydrolase (299 aa).

Residues methionine 1 and histidine 140 each coordinate Cu cation. Active-site charge relay system residues include serine 161, aspartate 241, and histidine 276.

This sequence belongs to the esterase D family. Monomer.

It is found in the cytoplasm. It carries out the reaction S-formylglutathione + H2O = formate + glutathione + H(+). Functionally, serine hydrolase involved in the detoxification of formaldehyde. This Saccharomyces cerevisiae (strain ATCC 204508 / S288c) (Baker's yeast) protein is S-formylglutathione hydrolase.